Consider the following 1163-residue polypeptide: Spike glycoprotein (1163 aa).

The first 18 residues, 1 to 18 (MLERSLLLATLLSALCSA), serve as a signal peptide directing secretion. Over 19–1096 (NLFGNNSYVY…LKTYIKWPWY (1078 aa)) the chain is Extracellular. 24 N-linked (GlcNAc...) asparagine; by host glycosylation sites follow: asparagine 23, asparagine 51, asparagine 74, asparagine 102, asparagine 139, asparagine 145, asparagine 164, asparagine 179, asparagine 213, asparagine 238, asparagine 248, asparagine 265, asparagine 272, asparagine 277, asparagine 307, asparagine 426, asparagine 448, asparagine 514, asparagine 531, asparagine 543, asparagine 580, asparagine 592, asparagine 670, and asparagine 677. The tract at residues 770–875 (IPFATQLQAR…QVDRIITGRL (106 aa)) is heptad repeat 1 (HR1). The stretch at 823 to 867 (QDVVNKQSSILTETMASLNKNFGAISSVLQDIYQQLDSIQADAQV) forms a coiled coil. Residues asparagine 948, asparagine 961, asparagine 980, asparagine 1015, asparagine 1039, asparagine 1052, and asparagine 1075 are each glycosylated (N-linked (GlcNAc...) asparagine; by host). Residues 1025–1106 (NDDFDFDDEL…VWLAIAFLTI (82 aa)) form a heptad repeat 2 (HR2) region. The stretch at 1056–1084 (PILDIGSEIDRIQGVIQGLNDSLIDLETL) forms a coiled coil. A helical membrane pass occupies residues 1097-1117 (VWLAIAFLTIIFILVLCWIFF). At 1118 to 1163 (MTGCCGCCCGCFGIIPLMSKCGKKSSYYTTFDNDVVYEQYRPKKSV) the chain is on the cytoplasmic side. The Di-lysine motif motif lies at 1160–1163 (KKSV).

It belongs to the gammacoronaviruses spike protein family. As to quaternary structure, homotrimer; each monomer consists of a S1 and a S2 subunit. The resulting peplomers protrude from the virus surface as spikes. Specific enzymatic cleavages in vivo yield mature proteins. The precursor is processed into S1 and S2 by host cell furin or furin-like protease to yield the mature S1 and S2 proteins. The cleavage site between S1 and S2 requires the optimal sequence [KR]-X-[KR]-R. Additionally, a second cleavage leads to the release of a fusion peptide after viral attachment to host cell receptor.

It localises to the virion membrane. It is found in the host endoplasmic reticulum-Golgi intermediate compartment membrane. Its function is as follows. Attaches the virion to the host cell membrane by interacting with sialic acids, initiating the infection. Mediates fusion of the virion and cellular membranes by acting as a class I viral fusion protein. Under the current model, the protein has at least 3 conformational states: pre-fusion native state, pre-hairpin intermediate state, and post-fusion hairpin state. During viral and target cell membrane fusion, the coiled coil regions (heptad repeats) assume a trimer-of-hairpins structure, positioning the fusion peptide in close proximity to the C-terminal region of the ectodomain. The formation of this structure appears to drive apposition and subsequent fusion of viral and target cell membranes. Functionally, acts as a viral fusion peptide after S2 cleavage occurring upon virus endocytosis. This is Spike glycoprotein from Gallus gallus (Chicken).